The chain runs to 104 residues: Thioredoxin (104 aa).

Positions 2 to 104 (AIVKATDQSF…ALQELVNKHL (103 aa)) constitute a Thioredoxin domain. An intrachain disulfide couples C29 to C32.

It belongs to the thioredoxin family.

Participates in various redox reactions through the reversible oxidation of its active center dithiol to a disulfide and catalyzes dithiol-disulfide exchange reactions. This chain is Thioredoxin (trxA), found in Bacillus subtilis (strain 168).